The primary structure comprises 390 residues: Oxygen-dependent coproporphyrinogen-III oxidase (390 aa).

The tract at residues 131 to 140 is important for dimerization; the sequence is VLQDGDVFEK. Substrate is bound at residue Ser181. His195 acts as the Proton donor in catalysis. Substrate-binding positions include 197-199 and 348-353; these read NYR and GARYES. The segment at 329–365 is important for dimerization; that stretch reads YVEFNLIYDRGTKFGLYTPGARYESILMSLPLHARWE.

It belongs to the aerobic coproporphyrinogen-III oxidase family. In terms of assembly, homodimer.

The enzyme catalyses coproporphyrinogen III + O2 + 2 H(+) = protoporphyrinogen IX + 2 CO2 + 2 H2O. It participates in porphyrin-containing compound metabolism; protoporphyrin-IX biosynthesis; protoporphyrinogen-IX from coproporphyrinogen-III (O2 route): step 1/1. Its function is as follows. Involved in the heme biosynthesis. Catalyzes the aerobic oxidative decarboxylation of propionate groups of rings A and B of coproporphyrinogen-III to yield the vinyl groups in protoporphyrinogen-IX. The polypeptide is Oxygen-dependent coproporphyrinogen-III oxidase (Coprox) (Drosophila melanogaster (Fruit fly)).